A 439-amino-acid chain; its full sequence is Hemagglutinin-esterase (439 aa).

Residues 1 to 22 form the signal peptide; the sequence is MGRMCIAMAPRTLLLLIGCQLV. Positions 12-132 are esterase domain 1; the sequence is TLLLLIGCQL…DNNKWMGNKA (121 aa). The Virion surface portion of the chain corresponds to 23-407; sequence FGFNEPINIV…PVCLYDPLPV (385 aa). S45 acts as the Nucleophile in catalysis. The cysteines at positions 49 and 70 are disulfide-linked. The N-linked (GlcNAc...) asparagine; by host glycan is linked to N94. Cysteines 118 and 167 form a disulfide. A receptor binding region spans residues 133–281; it reads RFYALLYKKM…GNYKAVSLEY (149 aa). N-linked (GlcNAc...) asparagine; by host glycans are attached at residues N196, N246, N309, and N316. 2 disulfides stabilise this stretch: C202–C291 and C210–C264. The segment at 282 to 395 is esterase domain 2; the sequence is LLTIPSKAIC…HCPTAANIGY (114 aa). A disulfide bond links C322 and C327. N331 carries N-linked (GlcNAc...) asparagine; by host glycosylation. Active-site charge relay system residues include D342 and H345. N-linked (GlcNAc...) asparagine; by host glycans are attached at residues N360 and N374. C363 and C387 are oxidised to a cystine. A helical membrane pass occupies residues 408–428; it reads ILLGVLLGIAVLIIVFLILYF. At 429 to 439 the chain is on the intravirion side; sequence MADSSVRLHEA.

It belongs to the influenza type C/coronaviruses hemagglutinin-esterase family. Homodimer; disulfide-linked. Forms a complex with the M protein in the pre-Golgi. Associates then with S-M complex to form a ternary complex S-M-HE. N-glycosylated in the host RER.

The protein resides in the virion membrane. The protein localises to the host cell membrane. It carries out the reaction N-acetyl-9-O-acetylneuraminate + H2O = N-acetylneuraminate + acetate + H(+). The enzyme catalyses N-acetyl-4-O-acetylneuraminate + H2O = N-acetylneuraminate + acetate + H(+). In terms of biological role, structural protein that makes short spikes at the surface of the virus. Contains receptor binding and receptor-destroying activities. Mediates de-O-acetylation of N-acetyl-4-O-acetylneuraminic acid, which is probably the receptor determinant recognized by the virus on the surface of erythrocytes and susceptible cells. This receptor-destroying activity is important for virus release as it probably helps preventing self-aggregation and ensures the efficient spread of the progeny virus from cell to cell. May serve as a secondary viral attachment protein for initiating infection, the spike protein being the major one. May become a target for both the humoral and the cellular branches of the immune system. The chain is Hemagglutinin-esterase from Rat coronavirus (strain 681) (RCV-SDAV).